The primary structure comprises 78 residues: Probable Fe(2+)-trafficking protein (78 aa).

It belongs to the Fe(2+)-trafficking protein family. As to quaternary structure, monomer.

Functionally, could be a mediator in iron transactions between iron acquisition and iron-requiring processes, such as synthesis and/or repair of Fe-S clusters in biosynthetic enzymes. This chain is Probable Fe(2+)-trafficking protein, found in Wigglesworthia glossinidia brevipalpis.